Consider the following 1002-residue polypeptide: Isoleucine--tRNA ligase (1002 aa).

A 'HIGH' region motif is present at residues 70–80 (PYANGNIHIGH). Glu630 is an L-isoleucyl-5'-AMP binding site. The short motif at 671 to 675 (KMSKS) is the 'KMSKS' region element. Lys674 is an ATP binding site.

Belongs to the class-I aminoacyl-tRNA synthetase family. IleS type 1 subfamily. In terms of assembly, monomer.

The protein resides in the cytoplasm. The enzyme catalyses tRNA(Ile) + L-isoleucine + ATP = L-isoleucyl-tRNA(Ile) + AMP + diphosphate. Its function is as follows. Catalyzes the attachment of isoleucine to tRNA(Ile). As IleRS can inadvertently accommodate and process structurally similar amino acids such as valine, to avoid such errors it has two additional distinct tRNA(Ile)-dependent editing activities. One activity is designated as 'pretransfer' editing and involves the hydrolysis of activated Val-AMP. The other activity is designated 'posttransfer' editing and involves deacylation of mischarged Val-tRNA(Ile). The polypeptide is Isoleucine--tRNA ligase (Bradyrhizobium diazoefficiens (strain JCM 10833 / BCRC 13528 / IAM 13628 / NBRC 14792 / USDA 110)).